Here is a 146-residue protein sequence, read N- to C-terminus: Ribonuclease H (146 aa).

The region spanning Met1–Arg143 is the RNase H type-1 domain. Residues Asp10, Glu48, Asp70, and Asp135 each contribute to the Mg(2+) site.

This sequence belongs to the RNase H family. Monomer. Mg(2+) serves as cofactor.

The protein resides in the cytoplasm. It catalyses the reaction Endonucleolytic cleavage to 5'-phosphomonoester.. Functionally, endonuclease that specifically degrades the RNA of RNA-DNA hybrids. In Chlorobium phaeovibrioides (strain DSM 265 / 1930) (Prosthecochloris vibrioformis (strain DSM 265)), this protein is Ribonuclease H.